The following is a 441-amino-acid chain: Protein cortex (441 aa).

7 WD repeats span residues 110–148 (SITS…VDQG), 149–187 (QTMF…QFVQ), 193–233 (IQIC…KSLV), 235–276 (IEGA…RFMK), 277–320 (TNEI…KLRQ), 345–379 (SLWS…ESHT), and 380–420 (GLNR…KILA). Positions 379–390 (TGLNRIRTMVFS) match the D-box motif.

It belongs to the WD repeat CORT family.

Its subcellular location is the cytoplasm. In terms of biological role, controls wing pigmentation patterning, possibly by regulating scale cell development. Probably acts as an activator of the anaphase promoting complex/cyclosome (APC/C) that promotes the ubiquitin ligase activity and substrate specificity of the APC/C. The chain is Protein cortex from Biston betularia (Pepper-and-salt geometer moth).